Consider the following 203-residue polypeptide: NAD(P)H dehydrogenase (quinone) (203 aa).

In terms of domain architecture, Flavodoxin-like spans 3-194 (VLIPFYSMYG…AGARYQGKYI (192 aa)). FMN contacts are provided by residues 9–14 (SMYGHI) and 82–84 (TRF). Tyr-11 serves as a coordination point for NAD(+). Trp-102 is a binding site for substrate. FMN-binding positions include 117–123 (SSATQHG) and His-138.

It belongs to the WrbA family. Requires FMN as cofactor.

It catalyses the reaction a quinone + NADH + H(+) = a quinol + NAD(+). It carries out the reaction a quinone + NADPH + H(+) = a quinol + NADP(+). This chain is NAD(P)H dehydrogenase (quinone), found in Geobacter metallireducens (strain ATCC 53774 / DSM 7210 / GS-15).